A 307-amino-acid polypeptide reads, in one-letter code: N-acetylmuramic acid 6-phosphate etherase (307 aa).

Residues 62 to 225 form the SIS domain; the sequence is VVDAFRVGGR…TTASMIRIGK (164 aa). Glu-90 acts as the Proton donor in catalysis. The active site involves Glu-121.

It belongs to the GCKR-like family. MurNAc-6-P etherase subfamily. Homodimer.

The enzyme catalyses N-acetyl-D-muramate 6-phosphate + H2O = N-acetyl-D-glucosamine 6-phosphate + (R)-lactate. It functions in the pathway amino-sugar metabolism; 1,6-anhydro-N-acetylmuramate degradation. The protein operates within amino-sugar metabolism; N-acetylmuramate degradation. It participates in cell wall biogenesis; peptidoglycan recycling. In terms of biological role, specifically catalyzes the cleavage of the D-lactyl ether substituent of MurNAc 6-phosphate, producing GlcNAc 6-phosphate and D-lactate. Together with AnmK, is also required for the utilization of anhydro-N-acetylmuramic acid (anhMurNAc) either imported from the medium or derived from its own cell wall murein, and thus plays a role in cell wall recycling. In Brucella anthropi (strain ATCC 49188 / DSM 6882 / CCUG 24695 / JCM 21032 / LMG 3331 / NBRC 15819 / NCTC 12168 / Alc 37) (Ochrobactrum anthropi), this protein is N-acetylmuramic acid 6-phosphate etherase.